The following is a 417-amino-acid chain: Gamma-glutamyl phosphate reductase (417 aa).

It belongs to the gamma-glutamyl phosphate reductase family.

Its subcellular location is the cytoplasm. The catalysed reaction is L-glutamate 5-semialdehyde + phosphate + NADP(+) = L-glutamyl 5-phosphate + NADPH + H(+). Its pathway is amino-acid biosynthesis; L-proline biosynthesis; L-glutamate 5-semialdehyde from L-glutamate: step 2/2. Its function is as follows. Catalyzes the NADPH-dependent reduction of L-glutamate 5-phosphate into L-glutamate 5-semialdehyde and phosphate. The product spontaneously undergoes cyclization to form 1-pyrroline-5-carboxylate. The chain is Gamma-glutamyl phosphate reductase from Escherichia coli O6:H1 (strain CFT073 / ATCC 700928 / UPEC).